A 220-amino-acid polypeptide reads, in one-letter code: Sec-independent protein translocase protein TatB (220 aa).

The chain crosses the membrane as a helical span at residues 1 to 21; the sequence is MFDIGFSELLLVLVIGLVVLG. Residues 192–220 form a disordered region; sequence KQQIDTIDSHGTDLSSAGPSRIHQPGGDQ.

It belongs to the TatB family. As to quaternary structure, the Tat system comprises two distinct complexes: a TatABC complex, containing multiple copies of TatA, TatB and TatC subunits, and a separate TatA complex, containing only TatA subunits. Substrates initially bind to the TatABC complex, which probably triggers association of the separate TatA complex to form the active translocon.

The protein resides in the cell inner membrane. Functionally, part of the twin-arginine translocation (Tat) system that transports large folded proteins containing a characteristic twin-arginine motif in their signal peptide across membranes. Together with TatC, TatB is part of a receptor directly interacting with Tat signal peptides. TatB may form an oligomeric binding site that transiently accommodates folded Tat precursor proteins before their translocation. This chain is Sec-independent protein translocase protein TatB, found in Yersinia pestis bv. Antiqua (strain Antiqua).